The primary structure comprises 631 residues: E3 ubiquitin-protein ligase Zswim2 (631 aa).

The SWIM-type zinc finger occupies 54–87 (FRVLLGNPHECSCPTFLKRGELCKHICWVLLKKF). The interval 139–348 (KDINAGDICP…APGYQCRLCL (210 aa)) is UBE2D1-binding. The segment at 147–199 (CPICQEVLLEKKLPVTFCRFGCGNNVHIKCMRILANYQDTGSDSSVLRCPLCR) adopts an RING-type 1 zinc-finger fold. Residues 230-281 (HLGIPCNNCNQLPIEGRCYKCTECVEYHLCQECFDSCCHSSHAFASREKRNQ) form a ZZ-type zinc finger. Residues Cys235, Cys238, Cys250, Cys253, Cys259, Cys262, His268, and His271 each contribute to the Zn(2+) site. Residues 344-386 (CRLCLKSFSFGQYTRLLPCTHKFHRKCIDNWLLHKCNSCPIDR) form an RING-type 2 zinc finger. A disordered region spans residues 589–614 (SKRQNNSMGKVRQKLGHPPRRPAYPP). Over residues 599 to 608 (VRQKLGHPPR) the composition is skewed to basic residues.

In terms of assembly, dimer. Interacts with UBE2D1. In terms of processing, polyubiquitinated. Polyubiquitination is followed by degradation via the proteasome. In terms of tissue distribution, expressed only in testis.

The enzyme catalyses S-ubiquitinyl-[E2 ubiquitin-conjugating enzyme]-L-cysteine + [acceptor protein]-L-lysine = [E2 ubiquitin-conjugating enzyme]-L-cysteine + N(6)-ubiquitinyl-[acceptor protein]-L-lysine.. E3 ubiquitin-protein ligase involved in the regulation of Fas-, DR3- and DR4-mediated apoptosis. Functions in conjunction with the UBE2D1, UBE2D3 and UBE2E1 E2 ubiquitin-conjugating enzymes. In Mus musculus (Mouse), this protein is E3 ubiquitin-protein ligase Zswim2 (Zswim2).